A 360-amino-acid chain; its full sequence is Phosphate acyltransferase (360 aa).

It belongs to the PlsX family. Homodimer. Probably interacts with PlsY.

It is found in the cytoplasm. It carries out the reaction a fatty acyl-[ACP] + phosphate = an acyl phosphate + holo-[ACP]. Its pathway is lipid metabolism; phospholipid metabolism. Catalyzes the reversible formation of acyl-phosphate (acyl-PO(4)) from acyl-[acyl-carrier-protein] (acyl-ACP). This enzyme utilizes acyl-ACP as fatty acyl donor, but not acyl-CoA. This chain is Phosphate acyltransferase, found in Caulobacter vibrioides (strain ATCC 19089 / CIP 103742 / CB 15) (Caulobacter crescentus).